We begin with the raw amino-acid sequence, 47 residues long: UPF0391 membrane protein rrnAC2507 (47 aa).

Helical transmembrane passes span 5-25 and 27-47; these read VVLVILAVVAGIAGFRGIAGL and FRVAKFLIVIFLVLALVTFLL.

It belongs to the UPF0391 family.

It localises to the cell membrane. The protein is UPF0391 membrane protein rrnAC2507 of Haloarcula marismortui (strain ATCC 43049 / DSM 3752 / JCM 8966 / VKM B-1809) (Halobacterium marismortui).